Reading from the N-terminus, the 1071-residue chain is Carbamoyl phosphate synthase large chain (1071 aa).

The interval 1–403 (MPKRTDLKSI…SFQKALRGLE (403 aa)) is carboxyphosphate synthetic domain. ATP is bound by residues R129, R169, G175, G176, Q208, V210, E215, G241, V242, H243, Q285, and E299. Positions 133–328 (KEAMEKIGLS…IAKVAAKLAV (196 aa)) constitute an ATP-grasp 1 domain. The Mg(2+) site is built by Q285, E299, and N301. Mn(2+)-binding residues include Q285, E299, and N301. Residues 404–548 (TGLCGFNPRS…YSTYEEECEA (145 aa)) are oligomerization domain. The tract at residues 549 to 930 (RPSDRKKVMI…AYYKAQLGAG (382 aa)) is carbamoyl phosphate synthetic domain. In terms of domain architecture, ATP-grasp 2 spans 673 to 864 (QKVLNDLGLR…LAKVGARCMA (192 aa)). 10 residues coordinate ATP: R709, F748, L750, E755, G780, I781, H782, S783, Q823, and E835. Residues Q823, E835, and N837 each contribute to the Mg(2+) site. Mn(2+) contacts are provided by Q823, E835, and N837. Residues 931 to 1071 (ERLNPTGKIF…ELHGRLKNRS (141 aa)) enclose the MGS-like domain. Positions 931–1071 (ERLNPTGKIF…ELHGRLKNRS (141 aa)) are allosteric domain.

Belongs to the CarB family. As to quaternary structure, composed of two chains; the small (or glutamine) chain promotes the hydrolysis of glutamine to ammonia, which is used by the large (or ammonia) chain to synthesize carbamoyl phosphate. Tetramer of heterodimers (alpha,beta)4. The cofactor is Mg(2+). It depends on Mn(2+) as a cofactor.

The enzyme catalyses hydrogencarbonate + L-glutamine + 2 ATP + H2O = carbamoyl phosphate + L-glutamate + 2 ADP + phosphate + 2 H(+). It carries out the reaction hydrogencarbonate + NH4(+) + 2 ATP = carbamoyl phosphate + 2 ADP + phosphate + 2 H(+). It participates in amino-acid biosynthesis; L-arginine biosynthesis; carbamoyl phosphate from bicarbonate: step 1/1. Its pathway is pyrimidine metabolism; UMP biosynthesis via de novo pathway; (S)-dihydroorotate from bicarbonate: step 1/3. Its function is as follows. Large subunit of the glutamine-dependent carbamoyl phosphate synthetase (CPSase). CPSase catalyzes the formation of carbamoyl phosphate from the ammonia moiety of glutamine, carbonate, and phosphate donated by ATP, constituting the first step of 2 biosynthetic pathways, one leading to arginine and/or urea and the other to pyrimidine nucleotides. The large subunit (synthetase) binds the substrates ammonia (free or transferred from glutamine from the small subunit), hydrogencarbonate and ATP and carries out an ATP-coupled ligase reaction, activating hydrogencarbonate by forming carboxy phosphate which reacts with ammonia to form carbamoyl phosphate. This Neisseria meningitidis serogroup A / serotype 4A (strain DSM 15465 / Z2491) protein is Carbamoyl phosphate synthase large chain.